We begin with the raw amino-acid sequence, 159 residues long: Cytochrome c-type biogenesis protein CcmE (159 aa).

Topologically, residues 1–7 (MTRKGRR) are cytoplasmic. A helical; Signal-anchor for type II membrane protein transmembrane segment spans residues 8–28 (LVLIGAGLGVLALAAGLILSA). Over 29–159 (LNDTIVFFRS…AAPVQRAPGS (131 aa)) the chain is Periplasmic. Heme-binding residues include H121 and Y125. A disordered region spans residues 134–159 (LKKQGRWQEGGPAPGTAAPVQRAPGS).

Belongs to the CcmE/CycJ family.

Its subcellular location is the cell inner membrane. Heme chaperone required for the biogenesis of c-type cytochromes. Transiently binds heme delivered by CcmC and transfers the heme to apo-cytochromes in a process facilitated by CcmF and CcmH. The polypeptide is Cytochrome c-type biogenesis protein CcmE (Xanthobacter autotrophicus (strain ATCC BAA-1158 / Py2)).